The sequence spans 148 residues: Large ribosomal subunit protein bL9 (148 aa).

It belongs to the bacterial ribosomal protein bL9 family.

Functionally, binds to the 23S rRNA. In Pseudomonas fluorescens (strain Pf0-1), this protein is Large ribosomal subunit protein bL9.